Consider the following 530-residue polypeptide: BTB/POZ domain-containing protein 3 (530 aa).

Residues 23–48 (KNRSKKGSKKANSSGGGGGGGSVGSG) form a disordered region. Residues 36–46 (SGGGGGGGSVG) are compositionally biased toward gly residues. One can recognise a BTB domain in the interval 128–198 (ADVHFVVGPP…IYCDEIDLAA (71 aa)). The region spanning 243–308 (FEEPDLTQRC…NWAEVECQRQ (66 aa)) is the BACK domain.

As to expression, in the somatosensory cortex, specifically expressed in spiny stellate neurons during barrel formation. Also expressed in the olfactory bulb, piriform cortex and hippocampus.

It localises to the cytoplasm. Its subcellular location is the cytosol. The protein resides in the nucleus. In terms of biological role, acts as a key regulator of dendritic field orientation during development of sensory cortex. Also directs dendrites toward active axon terminals when ectopically expressed. The polypeptide is BTB/POZ domain-containing protein 3 (Btbd3) (Mus musculus (Mouse)).